A 129-amino-acid chain; its full sequence is Virion-associated protein (129 aa).

Coiled-coil stretches lie at residues 1-31 and 38-59; these read MANL…ILEM and IKES…LIND. Positions 122 to 129 are capsid binding; sequence PAGWPNQF.

Belongs to the caulimovirus ORF III family. In terms of assembly, homotetramer, through coiled-coil domain. Homotrimer when interacts with icosehadral capsid. Interacts with capsid protein, and with Movement protein.

Its subcellular location is the virion. It localises to the host cell junction. The protein localises to the host plasmodesma. Plays a role in virus cell-to-cell and plant-to-plant transmission. Interacts with virion icosahedral capsid and movement protein, thereby facilitating virion cell-to-cell transmission through plasmodesmata opened by viral movement protein. Also interacts with aphid transmission factor, attaching the virion to aphid stylet when the animal feeds on an virus infected plant. Aphid saliva may later detach the virion, inducing release of infectious particles when the animal feeds on a new plant. This is Virion-associated protein from Arabidopsis thaliana (Mouse-ear cress).